A 518-amino-acid polypeptide reads, in one-letter code: Nitrogenase molybdenum-iron protein beta chain (518 aa).

[8Fe-7S] cluster-binding residues include cysteine 69, cysteine 94, and cysteine 152.

It belongs to the NifD/NifK/NifE/NifN family. In terms of assembly, tetramer of two alpha and two beta chains. Forms complex with the iron protein (nitrogenase component 2). Requires [8Fe-7S] cluster as cofactor.

It catalyses the reaction N2 + 8 reduced [2Fe-2S]-[ferredoxin] + 16 ATP + 16 H2O = H2 + 8 oxidized [2Fe-2S]-[ferredoxin] + 2 NH4(+) + 16 ADP + 16 phosphate + 6 H(+). In terms of biological role, this molybdenum-iron protein is part of the nitrogenase complex that catalyzes the key enzymatic reactions in nitrogen fixation. In Bradyrhizobium diazoefficiens (strain JCM 10833 / BCRC 13528 / IAM 13628 / NBRC 14792 / USDA 110), this protein is Nitrogenase molybdenum-iron protein beta chain (nifK).